Reading from the N-terminus, the 737-residue chain is ARMADILLO BTB ARABIDOPSIS PROTEIN 1 (737 aa).

ARM repeat units lie at residues 112 to 154, 165 to 212, 215 to 254, 257 to 296, 299 to 338, 341 to 380, 382 to 421, 456 to 495, and 497 to 536; these read DENV…KDCA, PGYQ…NIAH, PRIKTNIRVEGGIAPLVELLNFPDVKVQRAAAGALRTVSF, DENKSQIVELNALPTLVLMLQSQDSTVHGEAIGAIGNLVH, PDIKKEVIRAGALQPVIGLLSSTCLETQREAALLIGQFAA, SDCKVHIAQRGAITPLIKMLESSDEQVVEMSAFALGRLAQ, AHNQAGIAHRGGIISLLNLLDVKTGSVQHNAAFALYGLAD, LKRLQNKIHGPVLNQLLYLMRTAEKTVQIRIALALAHLCD, and KDGKLIFIDNNGVEFLLELLYFSSNKQQRYSSSALYELAK. Positions 568–635 constitute a BTB domain; the sequence is SDVTFLIDGK…IYSGRINIAK (68 aa).

As to quaternary structure, forms a heterodimeric complex with TCP24. Interacts with the origin recognition complex (preRC) components ORC1A, ORC1B, CDT1A and CDT1B. Interacts with DUF7/AIP1. In terms of tissue distribution, weakly expressed in the emerging lateral roots and mainly expressed in the shoot apex, young leaves and flower buds.

The protein localises to the nucleus. Its pathway is protein modification; protein ubiquitination. Functionally, may act as a substrate-specific adapter of an E3 ubiquitin-protein ligase complex (CUL3-RBX1-BTB) which mediates the ubiquitination and subsequent proteasomal degradation of target proteins. In association with TCP24, exerts a negative role in cell proliferation in leaves, possibly by inhibiting mitotic DNA replication. The protein is ARMADILLO BTB ARABIDOPSIS PROTEIN 1 (ABAP1) of Arabidopsis thaliana (Mouse-ear cress).